The primary structure comprises 81 residues: Photosystem I iron-sulfur center (81 aa).

2 consecutive 4Fe-4S ferredoxin-type domains span residues 2–31 and 39–68; these read SHSV…MVPW and IASA…VRVY. 8 residues coordinate [4Fe-4S] cluster: cysteine 11, cysteine 14, cysteine 17, cysteine 21, cysteine 48, cysteine 51, cysteine 54, and cysteine 58.

In terms of assembly, the eukaryotic PSI reaction center is composed of at least 11 subunits. Requires [4Fe-4S] cluster as cofactor.

It is found in the plastid. The protein resides in the chloroplast thylakoid membrane. The catalysed reaction is reduced [plastocyanin] + hnu + oxidized [2Fe-2S]-[ferredoxin] = oxidized [plastocyanin] + reduced [2Fe-2S]-[ferredoxin]. In terms of biological role, apoprotein for the two 4Fe-4S centers FA and FB of photosystem I (PSI); essential for photochemical activity. FB is the terminal electron acceptor of PSI, donating electrons to ferredoxin. The C-terminus interacts with PsaA/B/D and helps assemble the protein into the PSI complex. Required for binding of PsaD and PsaE to PSI. PSI is a plastocyanin/cytochrome c6-ferredoxin oxidoreductase, converting photonic excitation into a charge separation, which transfers an electron from the donor P700 chlorophyll pair to the spectroscopically characterized acceptors A0, A1, FX, FA and FB in turn. In Pleurastrum terricola (Filamentous green alga), this protein is Photosystem I iron-sulfur center.